Here is a 215-residue protein sequence, read N- to C-terminus: Octanoyltransferase (215 aa).

One can recognise a BPL/LPL catalytic domain in the interval 31 to 206; it reads PDSQDEIWLV…QLVKHLDYAE (176 aa). Residues 70-77, 137-139, and 150-152 contribute to the substrate site; these read RGGQVTYH, SLG, and GLA. The active-site Acyl-thioester intermediate is the C168.

The protein belongs to the LipB family.

Its subcellular location is the cytoplasm. The catalysed reaction is octanoyl-[ACP] + L-lysyl-[protein] = N(6)-octanoyl-L-lysyl-[protein] + holo-[ACP] + H(+). Its pathway is protein modification; protein lipoylation via endogenous pathway; protein N(6)-(lipoyl)lysine from octanoyl-[acyl-carrier-protein]: step 1/2. Catalyzes the transfer of endogenously produced octanoic acid from octanoyl-acyl-carrier-protein onto the lipoyl domains of lipoate-dependent enzymes. Lipoyl-ACP can also act as a substrate although octanoyl-ACP is likely to be the physiological substrate. This chain is Octanoyltransferase, found in Pseudomonas putida (strain ATCC 700007 / DSM 6899 / JCM 31910 / BCRC 17059 / LMG 24140 / F1).